A 58-amino-acid polypeptide reads, in one-letter code: uncharacterized protein (58 aa).

This is an uncharacterized protein from Methanocaldococcus jannaschii (strain ATCC 43067 / DSM 2661 / JAL-1 / JCM 10045 / NBRC 100440) (Methanococcus jannaschii).